The chain runs to 199 residues: dITP/XTP pyrophosphatase (199 aa).

7–12 (SANKGK) lines the substrate pocket. Mg(2+) is bound by residues Asp-38 and Asp-73. The active-site Proton acceptor is the Asp-73. Substrate contacts are provided by residues Ser-74, 155–158 (FGYD), Lys-178, and 183–184 (HR).

Belongs to the HAM1 NTPase family. In terms of assembly, homodimer. It depends on Mg(2+) as a cofactor.

The enzyme catalyses XTP + H2O = XMP + diphosphate + H(+). The catalysed reaction is dITP + H2O = dIMP + diphosphate + H(+). It catalyses the reaction ITP + H2O = IMP + diphosphate + H(+). Pyrophosphatase that catalyzes the hydrolysis of nucleoside triphosphates to their monophosphate derivatives, with a high preference for the non-canonical purine nucleotides XTP (xanthosine triphosphate), dITP (deoxyinosine triphosphate) and ITP. Seems to function as a house-cleaning enzyme that removes non-canonical purine nucleotides from the nucleotide pool, thus preventing their incorporation into DNA/RNA and avoiding chromosomal lesions. The protein is dITP/XTP pyrophosphatase of Aliarcobacter butzleri (strain RM4018) (Arcobacter butzleri).